The sequence spans 78 residues: Large ribosomal subunit protein bL28 (78 aa).

Belongs to the bacterial ribosomal protein bL28 family.

This Azoarcus sp. (strain BH72) protein is Large ribosomal subunit protein bL28.